We begin with the raw amino-acid sequence, 137 residues long: Small heat shock protein IbpA (137 aa).

A sHSP domain is found at 28–137 (TQSNGGYPPY…AMKPRRIEIK (110 aa)).

This sequence belongs to the small heat shock protein (HSP20) family. Monomer. Forms homomultimers of about 100-150 subunits at optimal growth temperatures. Conformation changes to monomers at high temperatures or high ionic concentrations.

It is found in the cytoplasm. Functionally, associates with aggregated proteins, together with IbpB, to stabilize and protect them from irreversible denaturation and extensive proteolysis during heat shock and oxidative stress. Aggregated proteins bound to the IbpAB complex are more efficiently refolded and reactivated by the ATP-dependent chaperone systems ClpB and DnaK/DnaJ/GrpE. Its activity is ATP-independent. This Pectobacterium atrosepticum (strain SCRI 1043 / ATCC BAA-672) (Erwinia carotovora subsp. atroseptica) protein is Small heat shock protein IbpA.